Here is a 277-residue protein sequence, read N- to C-terminus: F420-dependent methylenetetrahydromethanopterin dehydrogenase (277 aa).

The protein belongs to the MTD family.

The catalysed reaction is 5,10-methylenetetrahydromethanopterin + oxidized coenzyme F420-(gamma-L-Glu)(n) + 2 H(+) = 5,10-methenyl-5,6,7,8-tetrahydromethanopterin + reduced coenzyme F420-(gamma-L-Glu)(n). Its pathway is one-carbon metabolism; methanogenesis from CO(2); 5,10-methylene-5,6,7,8-tetrahydromethanopterin from 5,10-methenyl-5,6,7,8-tetrahydromethanopterin (coenzyme F420 route): step 1/1. Functionally, catalyzes the reversible reduction of methenyl-H(4)MPT(+) to methylene-H(4)MPT. This Methanococcus maripaludis (strain C5 / ATCC BAA-1333) protein is F420-dependent methylenetetrahydromethanopterin dehydrogenase.